Here is a 547-residue protein sequence, read N- to C-terminus: uncharacterized protein (547 aa).

This sequence to B.pertussis prn N-terminal region.

This is an uncharacterized protein from Escherichia coli O157:H7.